The chain runs to 359 residues: Probable isoaspartyl peptidase/L-asparaginase 3 (359 aa).

Thr-224 serves as the catalytic Nucleophile. Residues 252–255 (RVGD) and 275–278 (TGDG) each bind substrate.

This sequence belongs to the Ntn-hydrolase family. In terms of assembly, heterotetramer of two alpha and two beta chains arranged as a dimer of alpha/beta heterodimers. Post-translationally, cleaved into an alpha and beta chain by autocatalysis; this activates the enzyme. The N-terminal residue of the beta subunit is responsible for the nucleophile hydrolase activity.

The catalysed reaction is Cleavage of a beta-linked Asp residue from the N-terminus of a polypeptide.. In terms of biological role, acts in asparagine catabolism but also in the final steps of protein degradation via hydrolysis of a range of isoaspartyl dipeptides. This chain is Probable isoaspartyl peptidase/L-asparaginase 3, found in Arabidopsis thaliana (Mouse-ear cress).